Consider the following 567-residue polypeptide: Urease subunit alpha (567 aa).

A Urease domain is found at 130–567 (GGIDTHIHFI…LPLAQRYFLF (438 aa)). Positions 135, 137, and 218 each coordinate Ni(2+). Lys-218 carries the post-translational modification N6-carboxylysine. His-220 provides a ligand contact to substrate. Ni(2+) is bound by residues His-247 and His-273. His-321 (proton donor) is an active-site residue. Residue Asp-361 coordinates Ni(2+).

Belongs to the metallo-dependent hydrolases superfamily. Urease alpha subunit family. As to quaternary structure, heterotrimer of UreA (gamma), UreB (beta) and UreC (alpha) subunits. Three heterotrimers associate to form the active enzyme. It depends on Ni cation as a cofactor. Post-translationally, carboxylation allows a single lysine to coordinate two nickel ions.

It localises to the cytoplasm. It catalyses the reaction urea + 2 H2O + H(+) = hydrogencarbonate + 2 NH4(+). Its pathway is nitrogen metabolism; urea degradation; CO(2) and NH(3) from urea (urease route): step 1/1. This is Urease subunit alpha from Methylobacillus flagellatus (strain ATCC 51484 / DSM 6875 / VKM B-1610 / KT).